We begin with the raw amino-acid sequence, 206 residues long: Ras-related protein RABG3e (206 aa).

15-22 (GDSGVGKT) provides a ligand contact to GTP. Positions 37 to 45 (YKATIGADF) match the Effector region motif. GTP is bound by residues 63 to 67 (DTAGQ), 125 to 128 (NKID), and 158 to 159 (SA). Residues Cys204 and Cys206 are each lipidated (S-geranylgeranyl cysteine). Cys206 carries the cysteine methyl ester modification.

Belongs to the small GTPase superfamily. Rab family.

It localises to the cell membrane. Intracellular vesicle trafficking and protein transport. May play a role in adaptation to stress by recylcing macromolecules in specific cellular compartments. In Arabidopsis thaliana (Mouse-ear cress), this protein is Ras-related protein RABG3e (RABG3E).